We begin with the raw amino-acid sequence, 721 residues long: Rho GTPase-activating protein gacY (721 aa).

Residues M1–T325 form a disordered region. Low complexity predominate over residues N17–P33. Residues A34–Q44 show a composition bias toward pro residues. A compositionally biased stretch (low complexity) spans D146–N168. A compositionally biased stretch (acidic residues) spans N169–Y181. 2 stretches are compositionally biased toward polar residues: residues S182–N202 and K219–R240. The segment covering Q308–Q323 has biased composition (low complexity). One can recognise a CRAL-TRIO domain in the interval K363–K520. The 192-residue stretch at A528–F719 folds into the Rho-GAP domain.

It localises to the cytoplasm. Functionally, rho GTPase-activating protein involved in the signal transduction pathway. In Dictyostelium discoideum (Social amoeba), this protein is Rho GTPase-activating protein gacY (gacY).